We begin with the raw amino-acid sequence, 218 residues long: Putative glutamine transport system permease protein GlnP (218 aa).

An ABC transmembrane type-1 domain is found at 19-208; that stretch reads TLVTLKYSVI…ILVMLISFIA (190 aa). The next 4 helical transmembrane spans lie at 25–45, 57–79, 86–108, and 187–207; these read YSVIAVIFGLVIGMLLAICKV, FYTSIFRGTPLLIQLSIIYFASP, FSVFMAGAISFSLNSGAYVSEVI, and FFPMFIAACCYYILVMLISFI.

The protein belongs to the binding-protein-dependent transport system permease family. HisMQ subfamily.

The protein localises to the cell inner membrane. Part of the binding-protein-dependent transport system for glutamine; probably responsible for the translocation of the substrate across the membrane. This Rickettsia felis (strain ATCC VR-1525 / URRWXCal2) (Rickettsia azadi) protein is Putative glutamine transport system permease protein GlnP (glnP).